The following is a 241-amino-acid chain: Probable transcriptional regulatory protein Daro_4067 (241 aa).

The interval 1-22 is disordered; it reads MAGHSKWANIQHRKGRQDEKRG.

It belongs to the TACO1 family.

It is found in the cytoplasm. The polypeptide is Probable transcriptional regulatory protein Daro_4067 (Dechloromonas aromatica (strain RCB)).